A 411-amino-acid polypeptide reads, in one-letter code: Imidazolonepropionase (411 aa).

Fe(3+) is bound by residues histidine 75 and histidine 77. Zn(2+) is bound by residues histidine 75 and histidine 77. The 4-imidazolone-5-propanoate site is built by arginine 84, tyrosine 147, and histidine 180. Tyrosine 147 serves as a coordination point for N-formimidoyl-L-glutamate. Fe(3+) is bound at residue histidine 245. Histidine 245 serves as a coordination point for Zn(2+). Glutamine 248 serves as a coordination point for 4-imidazolone-5-propanoate. Residue aspartate 320 participates in Fe(3+) binding. Residue aspartate 320 participates in Zn(2+) binding. The N-formimidoyl-L-glutamate site is built by asparagine 322 and glycine 324. Threonine 325 is a binding site for 4-imidazolone-5-propanoate.

It belongs to the metallo-dependent hydrolases superfamily. HutI family. The cofactor is Zn(2+). It depends on Fe(3+) as a cofactor.

It localises to the cytoplasm. It carries out the reaction 4-imidazolone-5-propanoate + H2O = N-formimidoyl-L-glutamate. Its pathway is amino-acid degradation; L-histidine degradation into L-glutamate; N-formimidoyl-L-glutamate from L-histidine: step 3/3. Catalyzes the hydrolytic cleavage of the carbon-nitrogen bond in imidazolone-5-propanoate to yield N-formimidoyl-L-glutamate. It is the third step in the universal histidine degradation pathway. The polypeptide is Imidazolonepropionase (Aeromonas hydrophila subsp. hydrophila (strain ATCC 7966 / DSM 30187 / BCRC 13018 / CCUG 14551 / JCM 1027 / KCTC 2358 / NCIMB 9240 / NCTC 8049)).